The sequence spans 132 residues: L-ectoine synthase (132 aa).

It belongs to the ectoine synthase family.

It carries out the reaction (2S)-4-acetamido-2-aminobutanoate = L-ectoine + H2O. It functions in the pathway amine and polyamine biosynthesis; ectoine biosynthesis; L-ectoine from L-aspartate 4-semialdehyde: step 3/3. Its function is as follows. Catalyzes the circularization of gamma-N-acetyl-alpha,gamma-diaminobutyric acid (ADABA) to ectoine (1,4,5,6-tetrahydro-2-methyl-4-pyrimidine carboxylic acid), which is an excellent osmoprotectant. The polypeptide is L-ectoine synthase (Rhodococcus opacus (strain B4)).